The following is a 54-amino-acid chain: Large ribosomal subunit protein bL33 (54 aa).

The protein belongs to the bacterial ribosomal protein bL33 family.

This chain is Large ribosomal subunit protein bL33, found in Chloroflexus aurantiacus (strain ATCC 29366 / DSM 635 / J-10-fl).